The sequence spans 729 residues: Polyribonucleotide nucleotidyltransferase (729 aa).

Mg(2+) contacts are provided by aspartate 485 and aspartate 491. Residues 552 to 611 enclose the KH domain; sequence PRITTMKVAEDKIRTIIGKGGATIKGLIESTGVSIDIDDSGVVQLFSPDKMALEEAQKQI. The S1 motif domain maps to 621-689; sequence GQTYQGKVSK…KQGRVKLEWK (69 aa).

Belongs to the polyribonucleotide nucleotidyltransferase family. As to quaternary structure, component of the RNA degradosome, which is a multiprotein complex involved in RNA processing and mRNA degradation. Mg(2+) serves as cofactor.

The protein resides in the cytoplasm. The enzyme catalyses RNA(n+1) + phosphate = RNA(n) + a ribonucleoside 5'-diphosphate. Functionally, involved in mRNA degradation. Catalyzes the phosphorolysis of single-stranded polyribonucleotides processively in the 3'- to 5'-direction. This Legionella pneumophila subsp. pneumophila (strain Philadelphia 1 / ATCC 33152 / DSM 7513) protein is Polyribonucleotide nucleotidyltransferase.